The primary structure comprises 984 residues: Ephrin type-B receptor 1 (984 aa).

The signal sequence occupies residues 1-17 (MALDYLLLLLLASAVAA). The Extracellular segment spans residues 18–540 (MEETLMDTRT…YKSELREQLP (523 aa)). One can recognise an Eph LBD domain in the interval 19 to 201 (EETLMDTRTA…FFKKCPSIVQ (183 aa)). Fibronectin type-III domains are found at residues 322 to 432 (VPSG…TNQA) and 433 to 528 (APST…TLTD). N-linked (GlcNAc...) asparagine glycosylation is found at N334, N426, and N480. A helical membrane pass occupies residues 541–563 (LIAGSAAAGVVFVVSLVAISIVC). Residues 564–984 (SRKRAYSKEA…QISQSPTAMA (421 aa)) are Cytoplasmic-facing. Y600 carries the phosphotyrosine modification. The region spanning 619–882 (VKIEEVIGAG…EIVNTLDKMI (264 aa)) is the Protein kinase domain. Residues 625-633 (IGAGEFGEV) and K651 each bind ATP. D744 acts as the Proton acceptor in catalysis. The SAM domain occupies 911–975 (TAFTTVDDWL…LNSIHSMRVQ (65 aa)). Y928 carries the phosphotyrosine; by autocatalysis modification. The short motif at 982-984 (AMA) is the PDZ-binding element.

It belongs to the protein kinase superfamily. Tyr protein kinase family. Ephrin receptor subfamily. As to quaternary structure, heterotetramer upon binding of the ligand. The heterotetramer is composed of an ephrin dimer and a receptor dimer. Oligomerization is probably required to induce biological responses. Interacts with EPHB6; transphosphorylates EPHB6 to form an active signaling complex. Interacts with PICK1. Interacts (through Tyr-594) with NCK1 (via SH2 domain); activates the JUN cascade to regulate cell adhesion. The ligand-activated form interacts (through Tyr-928) with GRB7 and GRB10 (via SH2 domains). The ligand-activated form interacts (residues within the catalytic domain) with GRB2 (via SH2 domain). Interacts with GRB2, SHC1 and SRC; activates the MAPK/ERK cascade to regulate cell migration. Interacts with CBL; regulates receptor degradation through ubiquitination. Interacts with ACP1. Phosphorylated. Autophosphorylation is stimulated by the ligand EFNB1. Required for interaction with SH2 domain-containing interactors, for activation of the MAPK/ERK and JUN signaling cascades and for ubiquitination by CBL. Post-translationally, ubiquitinated; (EFNB1)ligand-induced poly- and/or multi-ubiquitination by CBL is regulated by SRC and leads to lysosomal degradation. In terms of tissue distribution, preferentially expressed in brain.

Its subcellular location is the cell membrane. The protein localises to the early endosome membrane. It is found in the cell projection. The protein resides in the dendrite. The enzyme catalyses L-tyrosyl-[protein] + ATP = O-phospho-L-tyrosyl-[protein] + ADP + H(+). Receptor tyrosine kinase which binds promiscuously transmembrane ephrin-B family ligands residing on adjacent cells, leading to contact-dependent bidirectional signaling into neighboring cells. The signaling pathway downstream of the receptor is referred to as forward signaling while the signaling pathway downstream of the ephrin ligand is referred to as reverse signaling. Cognate/functional ephrin ligands for this receptor include EFNB1, EFNB2 and EFNB3. During nervous system development, regulates retinal axon guidance redirecting ipsilaterally ventrotemporal retinal ganglion cells axons at the optic chiasm midline. This probably requires repulsive interaction with EFNB2. In the adult nervous system together with EFNB3, regulates chemotaxis, proliferation and polarity of the hippocampus neural progenitors. In addition to its role in axon guidance also plays an important redundant role with other ephrin-B receptors in development and maturation of dendritic spines and synapse formation. May also regulate angiogenesis. More generally, may play a role in targeted cell migration and adhesion. Upon activation by EFNB1 and probably other ephrin-B ligands activates the MAPK/ERK and the JNK signaling cascades to regulate cell migration and adhesion respectively. Involved in the maintenance of the pool of satellite cells (muscle stem cells) by promoting their self-renewal and reducing their activation and differentiation. This Homo sapiens (Human) protein is Ephrin type-B receptor 1 (EPHB1).